Reading from the N-terminus, the 217-residue chain is Small ribosomal subunit protein uS3c (217 aa).

In terms of domain architecture, KH type-2 spans 39–109; the sequence is IRNFLRTKLI…RFRITITYIP (71 aa).

The protein belongs to the universal ribosomal protein uS3 family. Part of the 30S ribosomal subunit.

Its subcellular location is the plastid. It localises to the chloroplast. The protein is Small ribosomal subunit protein uS3c (rps3) of Chlorokybus atmophyticus (Soil alga).